A 148-amino-acid polypeptide reads, in one-letter code: MPPNRLLLPKMRLWGLLPFLVPFILLWSIQEPALAEGVFIRTCPKYNKIKCDFEERNQCLRHRECPGEERCCLFACGRKCLDLSEDICSLPQDAGPCLAYLPRWWYNQDTKLCIEFIYGGCQGNPNNFESKAVCTSICINKRKMSSWI.

An N-terminal signal peptide occupies residues 1-35 (MPPNRLLLPKMRLWGLLPFLVPFILLWSIQEPALA). One can recognise a WAP domain in the interval 37-84 (GVFIRTCPKYNKIKCDFEERNQCLRHRECPGEERCCLFACGRKCLDLS). 7 disulfide bridges follow: Cys43–Cys72, Cys51–Cys76, Cys59–Cys71, Cys65–Cys80, Cys88–Cys138, Cys97–Cys121, and Cys113–Cys134. Residues 88–138 (CSLPQDAGPCLAYLPRWWYNQDTKLCIEFIYGGCQGNPNNFESKAVCTSIC) enclose the BPTI/Kunitz inhibitor domain.

Its subcellular location is the secreted. In Mus musculus (Mouse), this protein is WAP four-disulfide core domain protein 6B (Wfdc6b).